The following is a 292-amino-acid chain: Protease HtpX homolog (292 aa).

2 consecutive transmembrane segments (helical) span residues 4–24 (ILLF…VASL) and 39–59 (GALL…SLLI). Histidine 144 lines the Zn(2+) pocket. Glutamate 145 is an active-site residue. Histidine 148 is a Zn(2+) binding site. Helical transmembrane passes span 159-179 (LIQG…GYAV) and 199-219 (VTTI…VAWF). Residue glutamate 224 participates in Zn(2+) binding.

Belongs to the peptidase M48B family. It depends on Zn(2+) as a cofactor.

The protein resides in the cell inner membrane. The protein is Protease HtpX homolog of Verminephrobacter eiseniae (strain EF01-2).